A 164-amino-acid chain; its full sequence is Type II secretion system protein M (164 aa).

Over M1–Q17 the chain is Cytoplasmic. The chain crosses the membrane as a helical span at residues L18–P38. Residues W39–A164 lie on the Periplasmic side of the membrane.

It belongs to the GSP M family. As to quaternary structure, type II secretion system is composed of four main components: the outer membrane complex, the inner membrane complex, the cytoplasmic secretion ATPase and the periplasm-spanning pseudopilus. Forms homodimers. Interacts with OutL/GspL. Interacts with OutE/GspE and OutF/GspF.

The protein localises to the cell inner membrane. In terms of biological role, inner membrane component of the type II secretion system required for the energy-dependent secretion of extracellular factors such as proteases and toxins from the periplasm. Plays a role in the complex assembly and recruits OutL resulting in a stable complex in the inner membrane. Provides thus a link between the energy-providing OutE protein in the cytoplasm and the rest of the T2SS machinery. This Pectobacterium carotovorum subsp. carotovorum (Erwinia carotovora subsp. carotovora) protein is Type II secretion system protein M (outM).